We begin with the raw amino-acid sequence, 298 residues long: tRNA (guanine(9)-N1)-methyltransferase (298 aa).

The segment covering 1 to 10 (MSDTSENSNA) has biased composition (polar residues). The interval 1–44 (MSDTSENSNAEIPADTSDVKDKPKPIVRAPQFPPPPEGISKSQW) is disordered. One can recognise an SAM-dependent MTase TRM10-type domain in the interval 96–285 (PPKVNLNQSD…SVLPPRKLEV (190 aa)). S-adenosyl-L-methionine-binding positions include 192 to 193 (LT), G212, 216 to 220 (DKNRH), C224, L238, and 250 to 252 (KVL). The active-site Proton acceptor is the D216.

Belongs to the class IV-like SAM-binding methyltransferase superfamily. TRM10 family. Monomer.

The protein resides in the cytoplasm. It is found in the nucleus. It catalyses the reaction guanosine(9) in tRNA + S-adenosyl-L-methionine = N(1)-methylguanosine(9) in tRNA + S-adenosyl-L-homocysteine + H(+). In terms of biological role, S-adenosyl-L-methionine-dependent guanine N(1)-methyltransferase that catalyzes the formation of N(1)-methylguanine at position 9 (m1G9) in cytoplasmic tRNA. This Kluyveromyces lactis (strain ATCC 8585 / CBS 2359 / DSM 70799 / NBRC 1267 / NRRL Y-1140 / WM37) (Yeast) protein is tRNA (guanine(9)-N1)-methyltransferase.